The sequence spans 478 residues: Protein nucleotidyltransferase YdiU (478 aa).

ATP contacts are provided by Gly-84, Gly-86, Arg-87, Lys-107, Asp-119, Gly-120, Arg-170, and Arg-177. Asp-246 functions as the Proton acceptor in the catalytic mechanism. Mg(2+) is bound by residues Asn-247 and Asp-256. Asp-256 lines the ATP pocket.

It belongs to the SELO family. The cofactor is Mg(2+). It depends on Mn(2+) as a cofactor.

The enzyme catalyses L-seryl-[protein] + ATP = 3-O-(5'-adenylyl)-L-seryl-[protein] + diphosphate. The catalysed reaction is L-threonyl-[protein] + ATP = 3-O-(5'-adenylyl)-L-threonyl-[protein] + diphosphate. It catalyses the reaction L-tyrosyl-[protein] + ATP = O-(5'-adenylyl)-L-tyrosyl-[protein] + diphosphate. It carries out the reaction L-histidyl-[protein] + UTP = N(tele)-(5'-uridylyl)-L-histidyl-[protein] + diphosphate. The enzyme catalyses L-seryl-[protein] + UTP = O-(5'-uridylyl)-L-seryl-[protein] + diphosphate. The catalysed reaction is L-tyrosyl-[protein] + UTP = O-(5'-uridylyl)-L-tyrosyl-[protein] + diphosphate. Functionally, nucleotidyltransferase involved in the post-translational modification of proteins. It can catalyze the addition of adenosine monophosphate (AMP) or uridine monophosphate (UMP) to a protein, resulting in modifications known as AMPylation and UMPylation. In Escherichia coli O157:H7, this protein is Protein nucleotidyltransferase YdiU.